A 145-amino-acid polypeptide reads, in one-letter code: Basic phospholipase A2 Vb-2 (145 aa).

Residues Met1 to Ala19 form the signal peptide. A propeptide spanning residues Ala20–Leu27 is cleaved from the precursor. 7 disulfides stabilise this stretch: Cys38/Cys97, Cys52/Cys144, Cys54/Cys70, Cys69/Cys125, Cys76/Cys118, Cys86/Cys111, and Cys104/Cys116. Residues Tyr53, Gly55, and Gly57 each contribute to the Ca(2+) site. Residue His73 is part of the active site. A Ca(2+)-binding site is contributed by Asp74. Asp119 is a catalytic residue.

Ca(2+) serves as cofactor. As to expression, expressed by the venom gland.

It is found in the secreted. It catalyses the reaction a 1,2-diacyl-sn-glycero-3-phosphocholine + H2O = a 1-acyl-sn-glycero-3-phosphocholine + a fatty acid + H(+). Functionally, snake venom phospholipase A2 (PLA2) that has only a weak enzymatic activity. Inhibits neuromuscular transmission by blocking acetylcholine release from the nerve termini. PLA2 catalyzes the calcium-dependent hydrolysis of the 2-acyl groups in 3-sn-phosphoglycerides. This Bungarus fasciatus (Banded krait) protein is Basic phospholipase A2 Vb-2.